The following is a 478-amino-acid chain: Glycogen synthase (478 aa).

Lysine 15 serves as a coordination point for ADP-alpha-D-glucose.

The protein belongs to the glycosyltransferase 1 family. Bacterial/plant glycogen synthase subfamily.

It catalyses the reaction [(1-&gt;4)-alpha-D-glucosyl](n) + ADP-alpha-D-glucose = [(1-&gt;4)-alpha-D-glucosyl](n+1) + ADP + H(+). The protein operates within glycan biosynthesis; glycogen biosynthesis. Synthesizes alpha-1,4-glucan chains using ADP-glucose. This is Glycogen synthase from Streptococcus uberis (strain ATCC BAA-854 / 0140J).